The sequence spans 578 residues: Acyl-CoA synthetase ACTT5 (578 aa).

Residue 211 to 222 (RLTTSGTTGLPK) coordinates AMP. The tract at residues 472-551 (ELEAALLQAK…DEIPRSPTGK (80 aa)) is AMP-binding.

Belongs to the ATP-dependent AMP-binding enzyme family.

It participates in mycotoxin biosynthesis. Its function is as follows. Acyl-CoA synthetase; part of the gene clusters that mediate the biosynthesis of the host-selective toxins (HSTs) ACT-toxins responsible for brown spot of tangerine disease by the tangerine pathotype which affects tangerines and mandarins. ACT-toxins consist of three moieties, 9,10-epoxy-8-hydroxy-9-methyl-decatrienoic acid (EDA), valine and a polyketide. ACT-toxin I is toxic to both citrus and pear; toxin II the 5''-deoxy derivative of ACT-toxin I, is highly toxic to pear and slightly toxic to citrus. On cellular level, ACT-toxins affect plasma membrane of susceptible cells and cause a sudden increase in loss of K(+) after a few minutes of toxin treatment. The acyl-CoA ligase ACTT1, the hydrolase ACTT2, the enoyl-CoA hydratases ACTT3 and ACTT6, and the acyl-CoA synthetase ACTT5 are all involved in the biosynthesis of the AK-, AF- and ACT-toxin common 9,10-epoxy-8-hydroxy-9-methyl-decatrienoic acid (EDA) structural moiety. The exact role of each enzyme, and of additional enzymes identified within the AF-toxin clusters have still to be determined. On the other hand, ACTTS1 to ACTTS4 are specific to the tangerine pathotype. The function of ACTTS3 is to elongate the polyketide chain portion of ACT-toxin that is unique to this toxin. The enoyl-reductase ACTTS2 might complement the missing enoyl-reductase (ER) domain in ACTTS3 in the synthesis of the polyketide portion of ACT-toxin. The roles of the nonribosomal peptide synthetases-related proteins ACTTS1 and ACTTS4 have also still not been elucidated. In Alternaria alternata (Alternaria rot fungus), this protein is Acyl-CoA synthetase ACTT5.